The primary structure comprises 239 residues: Orotidine 5'-phosphate decarboxylase (239 aa).

Substrate contacts are provided by residues Asp10, Lys32, 59 to 68 (DLKLHDIPNT), Thr122, Arg184, Gln193, Gly213, and Arg214. The Proton donor role is filled by Lys61.

This sequence belongs to the OMP decarboxylase family. Type 1 subfamily. In terms of assembly, homodimer.

It catalyses the reaction orotidine 5'-phosphate + H(+) = UMP + CO2. It functions in the pathway pyrimidine metabolism; UMP biosynthesis via de novo pathway; UMP from orotate: step 2/2. In terms of biological role, catalyzes the decarboxylation of orotidine 5'-monophosphate (OMP) to uridine 5'-monophosphate (UMP). This chain is Orotidine 5'-phosphate decarboxylase, found in Geobacillus sp. (strain WCH70).